A 325-amino-acid chain; its full sequence is Putative HTH-type transcriptional regulatory protein HQ_3058A (325 aa).

Residues 132 to 186 enclose the HTH cro/C1-type domain; the sequence is LADEREERGWSLGRLATELGVSRRTVSKYEDGMNASIEIAIQLEEVFDEPFSSPL. The segment at residues 143–162 is a DNA-binding region (H-T-H motif); the sequence is LGRLATELGVSRRTVSKYED. The disordered stretch occupies residues 189 to 211; that stretch reads MEGAESVRDSEPTPDDPDPDADD. Residues 200-211 show a composition bias toward acidic residues; it reads PTPDDPDPDADD.

This Haloquadratum walsbyi (strain DSM 16790 / HBSQ001) protein is Putative HTH-type transcriptional regulatory protein HQ_3058A.